A 249-amino-acid polypeptide reads, in one-letter code: Methyltransferase 1 (249 aa).

Belongs to the FkbM methyltransferase family.

The protein operates within secondary metabolite biosynthesis. Functionally, methyltransferase; part of the pathway that mediates the biosynthesis of tenellin-type 2-pyridones, iron-chelating compounds involved in iron stress tolerance, competition with the natural competitor fungus Metarhizium robertsii and insect hosts infection. Methylates pyridovericin-N-O-(beta-D-glucopyranoside) produced by the UDP-glucosyltransferase GT1 to yield pyridovericin-N-O-(4-O-methyl-beta-D-glucopyranoside) (PMGP). The pathway begins with the assembly of the polyketide-amino acid backbone by the hybrid PKS-NRPS tenS with the help of the enoyl reductase tenC. These enzymes catalyze the synthesis of the pyrrolidine-2-dione intermediates pretellinin A, 11-hydropretellenin A, 12-hydropretellenin A, 13-hydropretellenin A, 14-hydropretellenin A, 12-oxopretellenin A and prototellinin D. The cytochrome P450 monooxygenase tenA then catalyzes an oxidative ring expansion of pretenellin A and 14-hydropretellenin A to form the 2-pyridone core, leading to pretenellin B and pyridovericin, respectively. The cytochrome P450 monooxygenase tenB is then required for the selective N-hydroxylation of the 2-pyridone nitrogen of yield tellinin and 15-hydroxytellenin (15-HT), respectively. The UDP-glucosyltransferase GT1 and the methyltransferase MT1, located outside the tenS gene cluster, contribute to the stepwise glycosylation and methylation of 15-HT to obtain the glycoside pyridovericin-N-O-(4-O-methyl-beta-D-glucopyranoside) (PMGP). Additional related compounds such as 1-O-methyl-15-HT, (8Z)-1-O-methyl-15-HT, and O-methyltenellin A are also produced but the enzymes involved in their biosynthesis have still to be determined. This Beauveria bassiana (strain ARSEF 2860) (White muscardine disease fungus) protein is Methyltransferase 1.